The sequence spans 214 residues: Ras-related protein Rab2BV (214 aa).

GTP is bound at residue G19–S26. The Effector region signature appears at S41–F49. GTP is bound by residues D67 to Q71 and N125 to D128. S-geranylgeranyl cysteine attachment occurs at residues C211 and C212.

Belongs to the small GTPase superfamily. Rab family.

Its subcellular location is the cell membrane. The chain is Ras-related protein Rab2BV (RAB2BV) from Beta vulgaris (Sugar beet).